Reading from the N-terminus, the 35-residue chain is Beta-theraphotoxin-Hlv1a (35 aa).

3 disulfides stabilise this stretch: Cys2–Cys17, Cys9–Cys24, and Cys16–Cys31.

It belongs to the neurotoxin 10 (Hwtx-1) family. 10 (haplotoxin-1) subfamily. As to expression, expressed by the venom gland.

The protein localises to the secreted. Spider venom neurotoxin that blocks voltage-gated sodium channel Nav1.3/SCN3A in human (IC(50)=1 uM) and rat (IC(50)=1 uM). This is Beta-theraphotoxin-Hlv1a from Cyriopagopus lividus (Cobalt blue tarantula).